A 202-amino-acid chain; its full sequence is Josephin-1 (202 aa).

Residues 1–22 (MSCVPWKGDKAKAESSDLPQAA) are disordered. Phosphoserine is present on Ser15. The Josephin domain maps to 23 to 202 (PPQIYHEKQR…EAHQSWRADV (180 aa)). Catalysis depends on Cys36, which acts as the Nucleophile. The Proton acceptor role is filled by His139.

Interacts with beta-actin/ACTB. In terms of processing, monoubiquitinated. Ubiquitination activates deubiquitination activity in vitro. As to expression, widely expressed (at protein level).

The protein resides in the cell membrane. It is found in the cytoplasm. It catalyses the reaction Thiol-dependent hydrolysis of ester, thioester, amide, peptide and isopeptide bonds formed by the C-terminal Gly of ubiquitin (a 76-residue protein attached to proteins as an intracellular targeting signal).. Its function is as follows. Deubiquitinates monoubiquitinated probes (in vitro). When ubiquitinated, cleaves 'Lys-63'-linked and 'Lys-48'-linked poly-ubiquitin chains (in vitro), hence may act as a deubiquitinating enzyme. May increase macropinocytosis and suppress clathrin- and caveolae-mediated endocytosis. May enhance membrane dynamics and cell motility independently of its catalytic activity. This Mus musculus (Mouse) protein is Josephin-1 (Josd1).